We begin with the raw amino-acid sequence, 214 residues long: Large ribosomal subunit protein uL18 (214 aa).

Belongs to the universal ribosomal protein uL18 family. Part of the 50S ribosomal subunit. Contacts the 5S and 23S rRNAs.

Functionally, this is one of the proteins that bind and probably mediate the attachment of the 5S RNA into the large ribosomal subunit, where it forms part of the central protuberance. The protein is Large ribosomal subunit protein uL18 of Aeropyrum pernix (strain ATCC 700893 / DSM 11879 / JCM 9820 / NBRC 100138 / K1).